Here is a 161-residue protein sequence, read N- to C-terminus: Type-1 angiotensin II receptor-associated protein (161 aa).

The Extracellular portion of the chain corresponds to methionine 1–phenylalanine 26. Residues serine 27–glutamine 47 traverse the membrane as a helical segment. Topologically, residues arginine 48–alanine 53 are cytoplasmic. Residues isoleucine 54 to isoleucine 74 traverse the membrane as a helical segment. The Extracellular segment spans residues phenylalanine 75 to arginine 86. The helical transmembrane segment at phenylalanine 87 to tyrosine 107 threads the bilayer. Over histidine 108–tyrosine 161 the chain is Cytoplasmic. An interaction with AGTR1 region spans residues histidine 110 to aspartate 122. Serine 127 carries the phosphoserine modification. Threonine 135 carries the phosphothreonine modification. A Phosphoserine modification is found at serine 138.

In terms of assembly, interacts with RACK1, and with the C-terminal region of AGTR1. Ubiquitous but more abundant in kidney, testis and heart.

Its subcellular location is the endoplasmic reticulum membrane. The protein resides in the golgi apparatus membrane. The protein localises to the cytoplasmic vesicle membrane. In terms of biological role, appears to be a negative regulator of type-1 angiotensin II receptor-mediated signaling by regulating receptor internalization as well as mechanism of receptor desensitization such as phosphorylation. Also induces a decrease in angiotensin II-stimulated transcriptional activity. May play a role of negative regulator in cardiomyocyte hypertrophy induced by angiotensin II through an inhibition of p38 mitogen-activated protein kinase pathway. This chain is Type-1 angiotensin II receptor-associated protein (Agtrap), found in Mus musculus (Mouse).